The chain runs to 249 residues: Glutathione S-transferase S1 (249 aa).

Positions 1–38 (MADEAQAPPAEGAPPAEGEAPPPAEGAEGAVEGGEAAP) are enriched in low complexity. Residues 1 to 42 (MADEAQAPPAEGAPPAEGEAPPPAEGAEGAVEGGEAAPPAEP) are disordered. The region spanning 48–125 (HSYTLFYFNV…FLAKTVGLCG (78 aa)) is the GST N-terminal domain. Residues Tyr54, Trp85, Lys89, 96–97 (QM), and 109–110 (QS) contribute to the glutathione site. The 123-residue stretch at 127–249 (TPWEDLQIDI…WIEKRPVTEV (123 aa)) folds into the GST C-terminal domain.

The protein belongs to the GST superfamily. Sigma family. As to quaternary structure, homodimer.

The enzyme catalyses RX + glutathione = an S-substituted glutathione + a halide anion + H(+). Its function is as follows. Conjugation of reduced glutathione to a wide number of exogenous and endogenous hydrophobic electrophiles. May be involved in the detoxification of metabolites produced during cellular division and morphogenesis. This is Glutathione S-transferase S1 from Drosophila melanogaster (Fruit fly).